The chain runs to 549 residues: Cytoplasmic trehalase (549 aa).

Substrate is bound by residues arginine 168, 175 to 176 (WD), asparagine 212, 221 to 223 (RSQ), 292 to 294 (RDE), and glycine 324. Active-site proton donor/acceptor residues include aspartate 326 and glutamate 509. Substrate is bound at residue glutamate 525.

Belongs to the glycosyl hydrolase 37 family. In terms of assembly, monomer.

Its subcellular location is the cytoplasm. The enzyme catalyses alpha,alpha-trehalose + H2O = alpha-D-glucose + beta-D-glucose. It functions in the pathway glycan degradation; trehalose degradation; D-glucose from alpha,alpha-trehalose: step 1/1. Its function is as follows. Hydrolyzes trehalose to glucose. Could be involved, in cells returning to low osmolarity conditions, in the utilization of the accumulated cytoplasmic trehalose, which was synthesized in response to high osmolarity. This is Cytoplasmic trehalase from Escherichia coli O157:H7.